Here is a 61-residue protein sequence, read N- to C-terminus: Protein stunted (61 aa).

Residues 3 to 15 (AWRAAGITYIQYS) form a sufficient for mth activation region.

This sequence belongs to the eukaryotic ATPase epsilon family.

In terms of biological role, activates the G-protein coupled receptor mth in vitro, leading to increased intracellular calcium ion levels. The polypeptide is Protein stunted (Drosophila melanogaster (Fruit fly)).